The chain runs to 427 residues: Histidine--tRNA ligase (427 aa).

Belongs to the class-II aminoacyl-tRNA synthetase family. As to quaternary structure, homodimer.

It is found in the cytoplasm. It carries out the reaction tRNA(His) + L-histidine + ATP = L-histidyl-tRNA(His) + AMP + diphosphate + H(+). The protein is Histidine--tRNA ligase of Aster yellows witches'-broom phytoplasma (strain AYWB).